The sequence spans 267 residues: 5'-nucleotidase SurE (267 aa).

Positions 9, 10, 40, and 97 each coordinate a divalent metal cation.

Belongs to the SurE nucleotidase family. It depends on a divalent metal cation as a cofactor.

Its subcellular location is the cytoplasm. It carries out the reaction a ribonucleoside 5'-phosphate + H2O = a ribonucleoside + phosphate. Its function is as follows. Nucleotidase that shows phosphatase activity on nucleoside 5'-monophosphates. The protein is 5'-nucleotidase SurE of Helicobacter pylori (strain Shi470).